The sequence spans 135 residues: NADPH-dependent 7-cyano-7-deazaguanine reductase (135 aa).

The active-site Thioimide intermediate is C48. D55 functions as the Proton donor in the catalytic mechanism. Substrate contacts are provided by residues 70 to 72 (IEL) and 89 to 90 (HE).

The protein belongs to the GTP cyclohydrolase I family. QueF type 1 subfamily.

It is found in the cytoplasm. The enzyme catalyses 7-aminomethyl-7-carbaguanine + 2 NADP(+) = 7-cyano-7-deazaguanine + 2 NADPH + 3 H(+). Its pathway is tRNA modification; tRNA-queuosine biosynthesis. Functionally, catalyzes the NADPH-dependent reduction of 7-cyano-7-deazaguanine (preQ0) to 7-aminomethyl-7-deazaguanine (preQ1). The protein is NADPH-dependent 7-cyano-7-deazaguanine reductase of Prochlorococcus marinus (strain MIT 9303).